Consider the following 251-residue polypeptide: Ubiquinone/menaquinone biosynthesis C-methyltransferase UbiE (251 aa).

S-adenosyl-L-methionine is bound by residues Thr-74, Asp-95, and 123–124; that span reads NA.

The protein belongs to the class I-like SAM-binding methyltransferase superfamily. MenG/UbiE family.

It catalyses the reaction a 2-demethylmenaquinol + S-adenosyl-L-methionine = a menaquinol + S-adenosyl-L-homocysteine + H(+). It carries out the reaction a 2-methoxy-6-(all-trans-polyprenyl)benzene-1,4-diol + S-adenosyl-L-methionine = a 5-methoxy-2-methyl-3-(all-trans-polyprenyl)benzene-1,4-diol + S-adenosyl-L-homocysteine + H(+). It functions in the pathway quinol/quinone metabolism; menaquinone biosynthesis; menaquinol from 1,4-dihydroxy-2-naphthoate: step 2/2. The protein operates within cofactor biosynthesis; ubiquinone biosynthesis. Methyltransferase required for the conversion of demethylmenaquinol (DMKH2) to menaquinol (MKH2) and the conversion of 2-polyprenyl-6-methoxy-1,4-benzoquinol (DDMQH2) to 2-polyprenyl-3-methyl-6-methoxy-1,4-benzoquinol (DMQH2). The chain is Ubiquinone/menaquinone biosynthesis C-methyltransferase UbiE from Marinomonas sp. (strain MWYL1).